The chain runs to 72 residues: Hirudin variant-2 (72 aa).

A signal peptide spans 1–7; the sequence is AICVSQA. Residues 8 to 10 are interaction with thrombin active site; that stretch reads ITY. 3 disulfide bridges follow: Cys-13–Cys-21, Cys-23–Cys-35, and Cys-29–Cys-46. The interval 47 to 72 is disordered; it reads VTGEGTPNPESHNNGDFEEIPEEYLQ. O-linked (GalNAc...) threonine glycosylation occurs at Thr-52. Residues 62-72 are interaction with fibrinogen-binding exosite of thrombin; sequence DFEEIPEEYLQ. Acidic residues predominate over residues 62–72; that stretch reads DFEEIPEEYLQ. Residue Tyr-70 is modified to Sulfotyrosine.

The protein belongs to the protease inhibitor I14 (hirudin) family.

It localises to the secreted. Hirudin is a potent thrombin-specific protease inhibitor. It forms a stable non-covalent complex with alpha-thrombin, thereby abolishing its ability to cleave fibrinogen. The sequence is that of Hirudin variant-2 from Hirudo medicinalis (Medicinal leech).